Reading from the N-terminus, the 473-residue chain is Digalactosyldiacylglycerol synthase 2, chloroplastic (473 aa).

2 interaction with the membrane lipid bilayer regions span residues 130 to 148 (LTWFHHGQKWKTKFNYVIG) and 227 to 245 (QPFTKGAYYIGKMVWSKGY).

The protein belongs to the glycosyltransferase group 1 family. Glycosyltransferase 4 subfamily. As to expression, expressed in leaves, flowers and roots, but not in stems and siliques.

The protein localises to the plastid. Its subcellular location is the chloroplast outer membrane. It catalyses the reaction a 1,2-diacyl-3-O-(beta-D-galactosyl)-sn-glycerol + UDP-alpha-D-galactose = a 1,2-diacyl-3-O-[alpha-D-galactosyl-(1-&gt;6)-beta-D-galactosyl]-sn-glycerol + UDP + H(+). Stimulated by anionic phospholipids. In terms of biological role, involved in the synthesis of diacylglycerol galactolipids that are specifically found in thylakoid membranes. Specific for alpha-glycosidic linkages. During phosphate shortage, involved in the biosynthesis of digalactosyldiacylglycerol (DGDG) which rescues the limitation of phospholipids. The sequence is that of Digalactosyldiacylglycerol synthase 2, chloroplastic from Arabidopsis thaliana (Mouse-ear cress).